The sequence spans 805 residues: Arginine/serine-rich protein PNISR (805 aa).

Residues 75 to 88 (NNHGNFQGDSNFNR) show a composition bias toward polar residues. 2 disordered regions span residues 75-331 (NNHG…EEKE) and 382-805 (LTGL…SRSR). Pro residues-rich tracts occupy residues 100-115 (PPHP…PAPG) and 183-194 (YWQPGPPGPPAP). Over residues 197-210 (NRRERPPSFRDRQR) the composition is skewed to basic and acidic residues. Ser-204 and Ser-211 each carry phosphoserine. Lys-218 participates in a covalent cross-link: Glycyl lysine isopeptide (Lys-Gly) (interchain with G-Cter in SUMO2). The stretch at 237–276 (REGLEKMEREKQKKLEKERMEQQRSQLSKKEKKATEDAEG) forms a coiled coil. Positions 238–258 (EGLEKMEREKQKKLEKERMEQ) are enriched in basic and acidic residues. 4 positions are modified to phosphoserine: Ser-290, Ser-304, Ser-313, and Ser-321. Over residues 290-299 (SDEEDEDAEN) the composition is skewed to acidic residues. Gly residues predominate over residues 384-393 (GLGGLGGYGS). Positions 421 to 463 (QKQEAFWRKEKEQQLLQDKQIEEEKQQTERVTKEMNEFIHREQ) are enriched in basic and acidic residues. Residues 427–461 (WRKEKEQQLLQDKQIEEEKQQTERVTKEMNEFIHR) adopt a coiled-coil conformation. 2 positions are modified to phosphoserine: Ser-465 and Ser-467. Basic and acidic residues-rich tracts occupy residues 473-486 (EADR…KRTP) and 494-508 (EPKR…ERGS). Thr-485 bears the Phosphothreonine mark. Residue Lys-496 forms a Glycyl lysine isopeptide (Lys-Gly) (interchain with G-Cter in SUMO2) linkage. A compositionally biased stretch (low complexity) spans 509-550 (RSGSSSSGSSSSGSRTSSSSSSVSSSSYSSSSGSSCTSSRSS). Composition is skewed to basic residues over residues 551–560 (SPKRRKRPSR), 567–579 (KARR…YSRR), 587–598 (TRGKLRDRRRSN), and 607–639 (RRNR…SRDR). Over residues 659–721 (EAKEQDRKKE…KRKRESERTF (63 aa)) the composition is skewed to basic and acidic residues. A Glycyl lysine isopeptide (Lys-Gly) (interchain with G-Cter in SUMO2) cross-link involves residue Lys-703. Ser-726 is subject to Phosphoserine. Over residues 732-753 (IRHDSRQDSKKNATKDSKRHSG) the composition is skewed to basic and acidic residues. Low complexity predominate over residues 754–767 (SDSSGRSSSESPGS). Basic residues-rich tracts occupy residues 771–781 (KKAKKPKHSRS) and 789–805 (RSGK…SRSR).

This sequence belongs to the splicing factor SR family. In terms of assembly, interacts with PNN.

The protein resides in the nucleus speckle. The chain is Arginine/serine-rich protein PNISR (Pnisr) from Mus musculus (Mouse).